Reading from the N-terminus, the 146-residue chain is Hemoglobin subunit beta-2 (146 aa).

Positions 2 to 146 (EWTNFERATI…VVSSLGKQYH (145 aa)) constitute a Globin domain. 2 residues coordinate heme b: histidine 63 and histidine 92.

The protein belongs to the globin family. Hb2 is a heterotetramer of two alpha chains and two beta-2 chains. In terms of tissue distribution, red blood cells.

Its function is as follows. Involved in oxygen transport from gills to the various peripheral tissues. This is Hemoglobin subunit beta-2 (hbb2) from Cygnodraco mawsoni (Antarctic dragonfish).